The primary structure comprises 360 residues: Protein phosphatase 1 regulatory subunit 7 (360 aa).

Residues 1 to 65 are disordered; the sequence is MAAERGAGQQ…DEDPEEGQEL (65 aa). Ala-2 carries the post-translational modification N-acetylalanine. Phosphoserine is present on residues Ser-12, Ser-24, Ser-27, Ser-44, and Ser-47. Basic and acidic residues predominate over residues 17–34; the sequence is EVDRRVESEESGDEEGKK. The segment covering 53-63 has biased composition (acidic residues); that stretch reads ERGDEDPEEGQ. LRR repeat units lie at residues 77 to 98, 99 to 120, 121 to 142, 143 to 164, 165 to 186, 187 to 208, 209 to 230, 231 to 252, 253 to 274, 275 to 296, and 297 to 318; these read DAED…EVLK, KVKT…EGLQ, SLRE…DALT, ELEV…DKLT, RLKK…SSLH, QLQM…DTLT, NLES…DALT, NLTV…QSLV, NLRE…DNNN, KLTM…SHLT, and ELQE…DELK. Ser-322 carries the phosphoserine modification. An LRRCT domain is found at 331–360; the sequence is NPLQRDPQYRRKIMLALPSVRQIDATFVRF.

It belongs to the SDS22 family. As to quaternary structure, interacts with PPP1CA, PPP1CB and PPP1CC/PPP1G. Interacts with PPP1CC isoform 2 in motile caudal epididymal spermatozoa. As to expression, expressed in epididymal spermatozoa including the principal piece of the flagellum and the head-neck junction.

The protein localises to the nucleus. Its function is as follows. Regulatory subunit of protein phosphatase 1. Inactivates the PPP1CC isoform 2 during epididymal sperm maturation. This chain is Protein phosphatase 1 regulatory subunit 7 (PPP1R7), found in Bos taurus (Bovine).